The following is a 214-amino-acid chain: Thymidylate kinase (214 aa).

Residue 7–14 (GVDGAGKR) participates in ATP binding. DTMP contacts are provided by Asp9, Tyr39, Phe70, Arg74, Arg95, Asn100, and Tyr103. Position 9 (Asp9) interacts with Mg(2+). The tract at residues 147-159 (GERSRGRAQRDPG) is LID. DTMP contacts are provided by Asp163 and Tyr165. Glu166 contacts Mg(2+).

Belongs to the thymidylate kinase family. Homodimer. The cofactor is Mg(2+).

It catalyses the reaction dTMP + ATP = dTDP + ADP. It participates in pyrimidine metabolism; dTTP biosynthesis. In terms of biological role, catalyzes the reversible phosphorylation of deoxythymidine monophosphate (dTMP) to deoxythymidine diphosphate (dTDP), using ATP as its preferred phosphoryl donor. Situated at the junction of both de novo and salvage pathways of deoxythymidine triphosphate (dTTP) synthesis, is essential for DNA synthesis and cellular growth. In Mycobacterium tuberculosis (strain CDC 1551 / Oshkosh), this protein is Thymidylate kinase (tmk).